We begin with the raw amino-acid sequence, 188 residues long: Large ribosomal subunit protein eL18 (188 aa).

Residues H151–K188 form a disordered region. 2 stretches are compositionally biased toward basic residues: residues S161–G171 and R178–K188.

Belongs to the eukaryotic ribosomal protein eL18 family.

Its subcellular location is the cytoplasm. This is Large ribosomal subunit protein eL18 (RpL18) from Lysiphlebus testaceipes (Greenbugs aphid parastoid).